A 188-amino-acid chain; its full sequence is Large ribosomal subunit protein eL18 (188 aa).

A disordered region spans residues 151–188 (HFGPAPGVPHSHTKPLVRSKGRKFERARGRRKSCGYKK). Basic residues-rich tracts occupy residues 161–171 (SHTKPLVRSKG) and 178–188 (RGRRKSCGYKK).

It belongs to the eukaryotic ribosomal protein eL18 family.

The protein localises to the cytoplasm. The protein is Large ribosomal subunit protein eL18 (RpL18) of Lysiphlebus testaceipes (Greenbugs aphid parastoid).